Consider the following 536-residue polypeptide: Suppressor of cytokine signaling 5 (536 aa).

The required for interaction with IL4R stretch occupies residues 1-50 (MDKVGKMWNNFKYRCQNLFGHEGGSRSENVDMNSNRCLSVKEKNISIGDS). The interval 115-175 (SRHAPWGGKK…SVSSRTVGSR (61 aa)) is disordered. Residues 158–169 (VSSVHDMDSVSS) are compositionally biased toward low complexity. The region spanning 381 to 476 (CYWGVMDRYE…FFEPLLTISL (96 aa)) is the SH2 domain. The 50-residue stretch at 471–520 (LLTISLNRTFPFSLQYICRAVICRCTTYDGIDGLPLPSMLQDFLKEYHYK) folds into the SOCS box domain.

In terms of assembly, interacts with IL4R; inhibits IL4 signaling. Interacts with EGFR. Interacts with ELOB and ELOC; mediates EGFR ubiquitination and degradation. Post-translationally, phosphorylated. Phosphorylation is induced by EGF.

It participates in protein modification; protein ubiquitination. SOCS family proteins form part of a classical negative feedback system that regulates cytokine signal transduction. May be a substrate-recognition component of a SCF-like ECS (Elongin BC-CUL2/5-SOCS-box protein) E3 ubiquitin-protein ligase complex which mediates the ubiquitination and subsequent proteasomal degradation of target proteins. Inhibits for instance EGF signaling by mediating the degradation of the EGF receptor/EGFR. Involved in the regulation of T-helper cell differentiation by inhibiting of the IL4 signaling pathway which promotes differentiation into the Th2 phenotype. Can also partially inhibit IL6 and LIF signaling. The protein is Suppressor of cytokine signaling 5 (SOCS5) of Homo sapiens (Human).